Reading from the N-terminus, the 109-residue chain is Large ribosomal subunit protein eL30 (109 aa).

It belongs to the eukaryotic ribosomal protein eL30 family. In terms of assembly, component of the large ribosomal subunit (LSU). Mature N.crassa ribosomes consist of a small (40S) and a large (60S) subunit. The 40S small subunit contains 1 molecule of ribosomal RNA (18S rRNA) and at least 32 different proteins. The large 60S subunit contains 3 rRNA molecules (26S, 5.8S and 5S rRNA) and at least 42 different proteins.

The protein localises to the cytoplasm. Functionally, component of the ribosome, a large ribonucleoprotein complex responsible for the synthesis of proteins in the cell. The small ribosomal subunit (SSU) binds messenger RNAs (mRNAs) and translates the encoded message by selecting cognate aminoacyl-transfer RNA (tRNA) molecules. The large subunit (LSU) contains the ribosomal catalytic site termed the peptidyl transferase center (PTC), which catalyzes the formation of peptide bonds, thereby polymerizing the amino acids delivered by tRNAs into a polypeptide chain. The nascent polypeptides leave the ribosome through a tunnel in the LSU and interact with protein factors that function in enzymatic processing, targeting, and the membrane insertion of nascent chains at the exit of the ribosomal tunnel. This Neurospora crassa (strain ATCC 24698 / 74-OR23-1A / CBS 708.71 / DSM 1257 / FGSC 987) protein is Large ribosomal subunit protein eL30 (rpl-30).